A 544-amino-acid polypeptide reads, in one-letter code: Chaperonin GroEL (544 aa).

ATP-binding positions include 29-32 (TLGP), 86-90 (DGTTT), glycine 413, 476-478 (NAA), and aspartate 492.

Belongs to the chaperonin (HSP60) family. As to quaternary structure, forms a cylinder of 14 subunits composed of two heptameric rings stacked back-to-back. Interacts with the co-chaperonin GroES.

It is found in the cytoplasm. It carries out the reaction ATP + H2O + a folded polypeptide = ADP + phosphate + an unfolded polypeptide.. In terms of biological role, together with its co-chaperonin GroES, plays an essential role in assisting protein folding. The GroEL-GroES system forms a nano-cage that allows encapsulation of the non-native substrate proteins and provides a physical environment optimized to promote and accelerate protein folding. The chain is Chaperonin GroEL from Bacillus pumilus (strain SAFR-032).